Here is a 202-residue protein sequence, read N- to C-terminus: Thymidylate kinase (202 aa).

7-14 (GTEGVGKT) serves as a coordination point for ATP.

Belongs to the thymidylate kinase family.

The enzyme catalyses dTMP + ATP = dTDP + ADP. Phosphorylation of dTMP to form dTDP in both de novo and salvage pathways of dTTP synthesis. The chain is Thymidylate kinase from Acinetobacter baylyi (strain ATCC 33305 / BD413 / ADP1).